We begin with the raw amino-acid sequence, 221 residues long: ATP phosphoribosyltransferase (221 aa).

It belongs to the ATP phosphoribosyltransferase family. Short subfamily. Heteromultimer composed of HisG and HisZ subunits.

It is found in the cytoplasm. It catalyses the reaction 1-(5-phospho-beta-D-ribosyl)-ATP + diphosphate = 5-phospho-alpha-D-ribose 1-diphosphate + ATP. It functions in the pathway amino-acid biosynthesis; L-histidine biosynthesis; L-histidine from 5-phospho-alpha-D-ribose 1-diphosphate: step 1/9. Catalyzes the condensation of ATP and 5-phosphoribose 1-diphosphate to form N'-(5'-phosphoribosyl)-ATP (PR-ATP). Has a crucial role in the pathway because the rate of histidine biosynthesis seems to be controlled primarily by regulation of HisG enzymatic activity. In Anaeromyxobacter sp. (strain K), this protein is ATP phosphoribosyltransferase.